A 268-amino-acid polypeptide reads, in one-letter code: Adenosylcobinamide-GDP ribazoletransferase (268 aa).

A run of 8 helical transmembrane segments spans residues 1-21 (MAGN…TLPV), 36-56 (YLFI…GTLF), 59-79 (ILPA…LTGI), 112-132 (AGGL…AMTF), 138-158 (WLFV…ITII), 182-202 (LAAV…AAII), 212-232 (IMAG…ILII), and 244-264 (VIGA…GAVL).

It belongs to the CobS family. Requires Mg(2+) as cofactor.

Its subcellular location is the cell membrane. It carries out the reaction alpha-ribazole + adenosylcob(III)inamide-GDP = adenosylcob(III)alamin + GMP + H(+). The enzyme catalyses alpha-ribazole 5'-phosphate + adenosylcob(III)inamide-GDP = adenosylcob(III)alamin 5'-phosphate + GMP + H(+). Its pathway is cofactor biosynthesis; adenosylcobalamin biosynthesis; adenosylcobalamin from cob(II)yrinate a,c-diamide: step 7/7. Its function is as follows. Joins adenosylcobinamide-GDP and alpha-ribazole to generate adenosylcobalamin (Ado-cobalamin). Also synthesizes adenosylcobalamin 5'-phosphate from adenosylcobinamide-GDP and alpha-ribazole 5'-phosphate. The protein is Adenosylcobinamide-GDP ribazoletransferase of Methanocella arvoryzae (strain DSM 22066 / NBRC 105507 / MRE50).